We begin with the raw amino-acid sequence, 182 residues long: NADH-quinone oxidoreductase subunit B (182 aa).

4 residues coordinate [4Fe-4S] cluster: Cys-61, Cys-62, Cys-126, and Cys-156.

This sequence belongs to the complex I 20 kDa subunit family. In terms of assembly, NDH-1 is composed of 14 different subunits. Subunits NuoB, C, D, E, F, and G constitute the peripheral sector of the complex. [4Fe-4S] cluster is required as a cofactor.

It localises to the cell inner membrane. It catalyses the reaction a quinone + NADH + 5 H(+)(in) = a quinol + NAD(+) + 4 H(+)(out). In terms of biological role, NDH-1 shuttles electrons from NADH, via FMN and iron-sulfur (Fe-S) centers, to quinones in the respiratory chain. The immediate electron acceptor for the enzyme in this species is believed to be ubiquinone. Couples the redox reaction to proton translocation (for every two electrons transferred, four hydrogen ions are translocated across the cytoplasmic membrane), and thus conserves the redox energy in a proton gradient. The protein is NADH-quinone oxidoreductase subunit B of Xanthomonas oryzae pv. oryzae (strain PXO99A).